Consider the following 419-residue polypeptide: L-rhamnose isomerase (419 aa).

Mn(2+) contacts are provided by His262, Asp294, and Asp296.

The protein belongs to the rhamnose isomerase family. As to quaternary structure, homotetramer. The cofactor is Mn(2+).

The protein localises to the cytoplasm. It catalyses the reaction L-rhamnopyranose = L-rhamnulose. It participates in carbohydrate degradation; L-rhamnose degradation; glycerone phosphate from L-rhamnose: step 1/3. In terms of biological role, catalyzes the interconversion of L-rhamnose and L-rhamnulose. This is L-rhamnose isomerase from Salmonella enteritidis PT4 (strain P125109).